The primary structure comprises 119 residues: Large ribosomal subunit protein bL20 (119 aa).

Belongs to the bacterial ribosomal protein bL20 family.

In terms of biological role, binds directly to 23S ribosomal RNA and is necessary for the in vitro assembly process of the 50S ribosomal subunit. It is not involved in the protein synthesizing functions of that subunit. This Lactococcus lactis subsp. cremoris (strain MG1363) protein is Large ribosomal subunit protein bL20.